Consider the following 397-residue polypeptide: Galactokinase (397 aa).

The interval 1 to 27 (MGEAVGEPSASGSGSCTGRSRRGCGRR) is disordered. A compositionally biased stretch (low complexity) spans 9–18 (SASGSGSCTG). Residue 36-39 (EHTD) coordinates substrate. ATP contacts are provided by residues Ser69 and 124–130 (GAGLSSS). Residues Ser130 and Glu161 each contribute to the Mg(2+) site. The active-site Proton acceptor is the Asp173. Residue Tyr225 coordinates substrate.

Belongs to the GHMP kinase family. GalK subfamily.

The protein localises to the cytoplasm. It carries out the reaction alpha-D-galactose + ATP = alpha-D-galactose 1-phosphate + ADP + H(+). The protein operates within carbohydrate metabolism; galactose metabolism. Functionally, catalyzes the transfer of the gamma-phosphate of ATP to D-galactose to form alpha-D-galactose-1-phosphate (Gal-1-P). The chain is Galactokinase from Streptomyces lividans.